The chain runs to 479 residues: Sulfate adenylyltransferase subunit 1 (479 aa).

The tr-type G domain occupies 25 to 239; the sequence is KSLLRFLTCG…EVLETVDIQR (215 aa). The G1 stretch occupies residues 34 to 41; the sequence is GSVDDGKS. Residue 34 to 41 coordinates GTP; sequence GSVDDGKS. Residues 92–96 form a G2 region; that stretch reads GITID. Residues 113-116 are G3; that stretch reads DTPG. Residues 113-117 and 168-171 each bind GTP; these read DTPGH and NKMD. Residues 168 to 171 are G4; it reads NKMD. A G5 region spans residues 206–208; the sequence is SAL.

It belongs to the TRAFAC class translation factor GTPase superfamily. Classic translation factor GTPase family. CysN/NodQ subfamily. As to quaternary structure, heterodimer composed of CysD, the smaller subunit, and CysN.

It catalyses the reaction sulfate + ATP + H(+) = adenosine 5'-phosphosulfate + diphosphate. Its pathway is sulfur metabolism; hydrogen sulfide biosynthesis; sulfite from sulfate: step 1/3. Functionally, with CysD forms the ATP sulfurylase (ATPS) that catalyzes the adenylation of sulfate producing adenosine 5'-phosphosulfate (APS) and diphosphate, the first enzymatic step in sulfur assimilation pathway. APS synthesis involves the formation of a high-energy phosphoric-sulfuric acid anhydride bond driven by GTP hydrolysis by CysN coupled to ATP hydrolysis by CysD. The chain is Sulfate adenylyltransferase subunit 1 from Salmonella newport (strain SL254).